We begin with the raw amino-acid sequence, 129 residues long: Gas vesicle protein C (129 aa).

Repeats lie at residues 19–51 (VTQLFRETHEFLSATTAHRQEQAKQQAQQLHQF), 52–84 (HQNLEQTTHEFLTETTTQRVAQAEAQANFLHKF), and 85–117 (HQNLEQTTQEFLAETAKNRTEQAKAQSQYLQQF). Positions 19–117 (VTQLFRETHE…KAQSQYLQQF (99 aa)) are 3 X 33 AA tandem repeats.

It belongs to the gas vesicle GvpC family.

Its subcellular location is the gas vesicle. Its function is as follows. Confers stability, involved in shaping gas vesicles, hollow, gas filled proteinaceous nanostructures. During planktonic growth they allow positioning of the organism at a favorable depth for light or nutrient acquisition. Cluster expression in E.coli (gvpA1-gvpA2-gvpC-gvpN-gvpJ-gvpK-gvpF-gvpG-gvpV-gvpW) allows cells to float and produces irregularly shaped gas vesicles. The chain is Gas vesicle protein C from Nostoc sp. (strain PCC 7120 / SAG 25.82 / UTEX 2576).